A 133-amino-acid chain; its full sequence is DVELKGKGGENEGFVGLKAQRNLYEDDRTSLSGTVKGQSQWKDPYPAQHAGMARLDGTRTLIENDRTKVTGSGFAQREVATGMRPHDSFGVGVEATHNIYKGKNGEVDVFGGVQRQWNTPDRHQARGGIRWRF.

Antibacterial peptide. Affects Gram-negative bacteria. This chain is Hemiptericin, found in Pyrrhocoris apterus (Sap sucking bug).